The primary structure comprises 260 residues: MAAEEASRSSPRFRREPKGRVSRQDKYSVLLPTYNERENLPFIVWLLVKSFSESGFNYEIIIIDDGSPDGTRDVAEQLEKIYGSDRILLRPREKKLGLGTAYIHGMKHATGNYIIIMDADLSHHPKFIPEFIRKQKEGNFDIVSGTRYKGNGGVYGWDLKRKIISRVANFITQILLRPGASDLTGSFRLYRKEVLQKLIGKCISKGYVFQMEMIVRARQLNYTIGEVPISFVDRVYGESKLGGNEIVSFLKGLLTLFATT.

The disordered stretch occupies residues 1–20 (MAAEEASRSSPRFRREPKGR). Alanine 2 is subject to N-acetylalanine. Serine 9 is modified (phosphoserine). GDP-alpha-D-mannose is bound by residues proline 32, tyrosine 34, glutamate 36, isoleucine 63, aspartate 65, aspartate 118, alanine 119, aspartate 120, arginine 147, arginine 234, and lysine 240. Residue aspartate 120 participates in Mg(2+) binding. Aspartate 120 contacts Mn(2+).

It belongs to the glycosyltransferase 2 family. Component of the dolichol-phosphate mannose (DPM) synthase complex composed of DPM1, DPM2 and DPM3; within the complex, directly interacts with DPM3. This interaction may stabilize DPM1. Mg(2+) is required as a cofactor. The cofactor is Mn(2+). It depends on Ca(2+) as a cofactor.

The protein localises to the endoplasmic reticulum. The catalysed reaction is a di-trans,poly-cis-dolichyl phosphate + GDP-alpha-D-mannose = a di-trans,poly-cis-dolichyl beta-D-mannosyl phosphate + GDP. Its pathway is protein modification; protein glycosylation. Transfers mannose from GDP-mannose to dolichol monophosphate to form dolichol phosphate mannose (Dol-P-Man) which is the mannosyl donor in pathways leading to N-glycosylation, glycosyl phosphatidylinositol membrane anchoring, and O-mannosylation of proteins; catalytic subunit of the dolichol-phosphate mannose (DPM) synthase complex. This is Dolichol-phosphate mannosyltransferase subunit 1 (DPM1) from Bos taurus (Bovine).